The primary structure comprises 539 residues: MARYARVATLAACLLFACALADGHRWRRQADETAKKDESLEQELCKDKDAGEWFRLVAGEGDNCRDVIQCTASGIQAIRCPAGLFFDIEKQTCDWKDAVKNCKLKNKERKIKPLLYTEEPLCQDGFLACGDSTCIERGLFCNGEKDCGDGSDENSCDIDNDPNRAPPCDSSQCVLPDCFCSEDGTVIPGDLPARDVPQMITITFDDAINNNNIELYKEIFNGKRKNPNGCDIKATYFVSHKYTNYSAVQETHRKGHEIAVHSITHNDDERFWSNATVDDWGKEMAGMRVIIEKFSNITDNSVVGVRAPYLRVGGNNQFTMMEEQAFLYDSTITAPLSNPRLCPYTMYFRMPHRCHGNLQSCPTRSHAVWEMVMNELDRREDPSNDEYLPGCAMVDSCSNILTGDQFYNFLNHNFDRHYEQNRAPLGLYFHAAWLKNNPEFLEAFLYWIDEILQSHNDVYFVTMTQVIQWVQNPRTVTEAKNFEPWREKCSVEGNPACWVPHSCKLTSKEVPGETINLQTCLRCPVNYPWLNDPTGDGHY.

Residues 1–23 (MARYARVATLAACLLFACALADG) form the signal peptide. Residues 42-104 (QELCKDKDAG…WKDAVKNCKL (63 aa)) enclose the Chitin-binding type-2 domain. Disulfide bonds link C80/C93, C122/C134, C129/C147, C141/C156, C168/C180, and C173/C178. One can recognise an LDL-receptor class A domain in the interval 121-157 (LCQDGFLACGDSTCIERGLFCNGEKDCGDGSDENSCD). D206 is a Zn(2+) binding site. Intrachain disulfides connect C230–C489, C354–C361, C391–C397, C497–C520, and C503–C523. A glycan (N-linked (GlcNAc...) asparagine) is linked at N244. Residues H261 and H265 each contribute to the Zn(2+) site. A glycan (N-linked (GlcNAc...) asparagine) is linked at N296.

It belongs to the carbohydrate esterase 4 (CE4) family. As to quaternary structure, interacts with CPAP3-A1. Zn(2+) is required as a cofactor. In terms of tissue distribution, highly expressed in epidermis and head. Moderate expression levels in fat body, Malpighian tubule, testis and midgut. Low expression in silk gland and ovary.

It is found in the secreted. The catalysed reaction is [(1-&gt;4)-N-acetyl-beta-D-glucosaminyl](n) + n H2O = chitosan + n acetate. With respect to regulation, binding to the accessory protein CPAP3-A1 is essential for chitinase activity. Hydrolyzes the N-acetamido groups of N-acetyl-D-glucosamine residues in chitin. The chain is Chitin deacetylase 1 from Bombyx mori (Silk moth).